The chain runs to 378 residues: 3-dehydroquinate synthase (378 aa).

Residues 115–119 (GVVGD), 139–140 (TS), K152, and K161 contribute to the NAD(+) site. Residues E194, H256, and H275 each contribute to the Zn(2+) site.

The protein belongs to the sugar phosphate cyclases superfamily. Dehydroquinate synthase family. Co(2+) serves as cofactor. The cofactor is Zn(2+). It depends on NAD(+) as a cofactor.

The protein localises to the cytoplasm. It carries out the reaction 7-phospho-2-dehydro-3-deoxy-D-arabino-heptonate = 3-dehydroquinate + phosphate. It participates in metabolic intermediate biosynthesis; chorismate biosynthesis; chorismate from D-erythrose 4-phosphate and phosphoenolpyruvate: step 2/7. In terms of biological role, catalyzes the conversion of 3-deoxy-D-arabino-heptulosonate 7-phosphate (DAHP) to dehydroquinate (DHQ). The protein is 3-dehydroquinate synthase of Brucella suis (strain ATCC 23445 / NCTC 10510).